A 441-amino-acid chain; its full sequence is Chromosome partition protein MukF (441 aa).

The leucine-zipper stretch occupies residues 208 to 236 (LDETSGNLRELQDTLNAAGDKLQAQLLRI).

It belongs to the MukF family. In terms of assembly, interacts, and probably forms a ternary complex, with MukE and MukB via its C-terminal region. The complex formation is stimulated by calcium or magnesium. It is required for an interaction between MukE and MukB.

It localises to the cytoplasm. The protein resides in the nucleoid. Involved in chromosome condensation, segregation and cell cycle progression. May participate in facilitating chromosome segregation by condensation DNA from both sides of a centrally located replisome during cell division. Not required for mini-F plasmid partitioning. Probably acts via its interaction with MukB and MukE. Overexpression results in anucleate cells. It has a calcium binding activity. The protein is Chromosome partition protein MukF of Pasteurella multocida (strain Pm70).